The sequence spans 263 residues: Thiazole synthase (263 aa).

Lysine 100 (schiff-base intermediate with DXP) is an active-site residue. Residues glycine 161, 187-188, and 209-210 contribute to the 1-deoxy-D-xylulose 5-phosphate site; these read AG and NT.

Belongs to the ThiG family. Homotetramer. Forms heterodimers with either ThiH or ThiS.

The protein localises to the cytoplasm. The catalysed reaction is [ThiS sulfur-carrier protein]-C-terminal-Gly-aminoethanethioate + 2-iminoacetate + 1-deoxy-D-xylulose 5-phosphate = [ThiS sulfur-carrier protein]-C-terminal Gly-Gly + 2-[(2R,5Z)-2-carboxy-4-methylthiazol-5(2H)-ylidene]ethyl phosphate + 2 H2O + H(+). It functions in the pathway cofactor biosynthesis; thiamine diphosphate biosynthesis. In terms of biological role, catalyzes the rearrangement of 1-deoxy-D-xylulose 5-phosphate (DXP) to produce the thiazole phosphate moiety of thiamine. Sulfur is provided by the thiocarboxylate moiety of the carrier protein ThiS. In vitro, sulfur can be provided by H(2)S. This Shouchella clausii (strain KSM-K16) (Alkalihalobacillus clausii) protein is Thiazole synthase.